Here is a 124-residue protein sequence, read N- to C-terminus: Apolipoprotein C-IV (124 aa).

An N-terminal signal peptide occupies residues 1–27 (MLLPRRGLRTLPSLCLYILVLVWVVAC).

It belongs to the apolipoprotein C4 family. Glycosylated; contains sialic acid. Present in up to five sialylated isoforms. In terms of tissue distribution, blood plasma, associated primarily with VLDL and HDL. Expressed mainly in the liver.

The protein localises to the secreted. In terms of biological role, may participate in lipoprotein metabolism. The polypeptide is Apolipoprotein C-IV (APOC4) (Oryctolagus cuniculus (Rabbit)).